The sequence spans 318 residues: Thymidylate synthase (318 aa).

DUMP is bound by residues R25 and 180-181 (RR). Residue C200 is the Nucleophile of the active site. DUMP is bound by residues 220–223 (RSGD), N231, and 261–263 (HIY). D223 serves as a coordination point for (6R)-5,10-methylene-5,6,7,8-tetrahydrofolate. A317 contacts (6R)-5,10-methylene-5,6,7,8-tetrahydrofolate.

Belongs to the thymidylate synthase family. Bacterial-type ThyA subfamily. In terms of assembly, homodimer.

The protein localises to the cytoplasm. It carries out the reaction dUMP + (6R)-5,10-methylene-5,6,7,8-tetrahydrofolate = 7,8-dihydrofolate + dTMP. Its pathway is pyrimidine metabolism; dTTP biosynthesis. Catalyzes the reductive methylation of 2'-deoxyuridine-5'-monophosphate (dUMP) to 2'-deoxythymidine-5'-monophosphate (dTMP) while utilizing 5,10-methylenetetrahydrofolate (mTHF) as the methyl donor and reductant in the reaction, yielding dihydrofolate (DHF) as a by-product. This enzymatic reaction provides an intracellular de novo source of dTMP, an essential precursor for DNA biosynthesis. The chain is Thymidylate synthase from Lactobacillus delbrueckii subsp. bulgaricus (strain ATCC BAA-365 / Lb-18).